A 313-amino-acid polypeptide reads, in one-letter code: Homeobox protein CDX-2 (313 aa).

Phosphoserine is present on Ser60. Residues 113–153 (HAHHHPHHHPHHPAAAPSCASGLLQTLNPGPPGPAATGAAE) are disordered. The segment covering 114 to 124 (AHHHPHHHPHH) has biased composition (basic residues). Residues 185 to 215 (KDKYRVVYTDHQRLELEKEFHYSRYITIRRK) form an interaction with DNA region. The segment at residues 185–244 (KDKYRVVYTDHQRLELEKEFHYSRYITIRRKAELAATLGLSERQVKIWFQNRRAKERKIN) is a DNA-binding region (homeobox). The interaction with 5-mCpG DNA stretch occupies residues 227–241 (RQVKIWFQNRRAKER). The segment at 242–313 (KINKKKLQQQ…GGVLNPTVTQ (72 aa)) is disordered. 2 stretches are compositionally biased toward low complexity: residues 249–261 (QQQQQQQQQQQLA) and 271–300 (QPGSLRSVPEPLSPVSSLQGSVPGSVPGVL). Ser283 carries the post-translational modification Phosphoserine. The 4S motif; modulates transactivation activity and protein stability signature appears at 283–295 (SPVSSLQGSVPGS).

This sequence belongs to the Caudal homeobox family. In terms of assembly, can bind DNA as a monomer or homodimer. In terms of processing, ubiquitinated, leading to its degradation by the proteasome. Phosphorylation at Ser-60 reduces transactivation capacity. Phosphorylation at Ser-283 reduces transactivation capacity and also increases ubiquitin-dependent proteasome degradation. As to expression, expressed in the intestine.

The protein localises to the nucleus. Functionally, transcription factor which regulates the transcription of multiple genes expressed in the intestinal epithelium. Binds to the promoter of the intestinal sucrase-isomaltase SI and activates SI transcription. Binds to the DNA sequence 5'-ATAAAAACTTAT-3' in the promoter region of VDR and activates VDR transcription. Binds to and activates transcription of LPH. Activates transcription of CLDN2 and intestinal mucin MUC2. Binds to the 5'-AATTTTTTACAACACCT-3' DNA sequence in the promoter region of CA1 and activates CA1 transcription. Important in broad range of functions from early differentiation to maintenance of the intestinal epithelial lining of both the small and large intestine. Binds preferentially to methylated DNA. This Mesocricetus auratus (Golden hamster) protein is Homeobox protein CDX-2 (CDX2).